Here is a 326-residue protein sequence, read N- to C-terminus: Bifunctional pinoresinol-lariciresinol reductase (326 aa).

Residues 25 to 31 (GGTGYLG), R50, and K59 each bind NADP(+). The Proton acceptor role is filled by K153. R157 serves as a coordination point for NADP(+). Residue H285 coordinates substrate.

It belongs to the NmrA-type oxidoreductase family. Isoflavone reductase subfamily. In terms of assembly, dimer.

The catalysed reaction is (+)-lariciresinol + NADP(+) = (+)-pinoresinol + NADPH + H(+). The enzyme catalyses (-)-secoisolariciresinol + NADP(+) = (+)-lariciresinol + NADPH + H(+). Its function is as follows. Reductase involved in lignan biosynthesis. Catalyzes the enantioselective conversion of (+)-pinoresinol into (+)-lariciresinol and of (+)-lariciresinol into (-)-secoisolariciresinol. Abstracts the 4R-hydride from the NADPH cofactor during catalysis. The chain is Bifunctional pinoresinol-lariciresinol reductase (PLR1) from Linum album (Flax).